The following is a 248-amino-acid chain: Large ribosomal subunit protein uL4 (248 aa).

A disordered region spans residues 45 to 105 (PYGADPYAGM…KDQSKSVNTK (61 aa)). Basic and acidic residues predominate over residues 92–105 (PKAEKDQSKSVNTK).

The protein belongs to the universal ribosomal protein uL4 family. Part of the 50S ribosomal subunit.

In terms of biological role, one of the primary rRNA binding proteins, this protein initially binds near the 5'-end of the 23S rRNA. It is important during the early stages of 50S assembly. It makes multiple contacts with different domains of the 23S rRNA in the assembled 50S subunit and ribosome. Forms part of the polypeptide exit tunnel. The sequence is that of Large ribosomal subunit protein uL4 from Haloquadratum walsbyi (strain DSM 16790 / HBSQ001).